A 667-amino-acid chain; its full sequence is MSLTNLFKLQSSLKPSGDQPQAIQKLVNNFKQGLKEQILLGATGTGKTFTIANIIQHLQQKTLVIAHNKTLAGQLYNELKAMFPNNRVEYFISYYDYYQPEAYVASSDTYIEKDSKINDEIDQLRHSAAGSLINRDDVIVVASVSCIYGVGDLKDYQKSTLHLQIGDKYERKNLINKLIELKYQRNEINFQRGTFRVRGDIIEIIASSSKEIGIRIIFFGNEIENIQNFYVLNGKAIANLKLITLFPASLYATNNQKLQESIKRIRQELKEQINHFEKTNQLLAAQKIKMRTLHDLEMLEQIGNCNGVENYSRHLALKGKGEAPSTLIDFFGNDFLTIVDESHVTIPQIKGMYFGDFSRKNNLVNFGFRLPSALDNRPLKFNEFQEKMNKVIYLSATPGDYELTKKIPIVEQIIRPTFVLDPEIEVRPTNNQMDDLYFEIKHQTKNNQRILITTLTINMSEDLTTYLKNLGIKVAYLHSEIKSLQRLEILKDLRLGKYDCLVGVNLLREGLDLPEVALVAILDADKQGFLRNERSLIQTIGRAARNITGKAIMYADCISPAMQIAIEETYRRRKIQKQYNETMKVTPTALNKTILETISIKQKERIKNEKGKSKVQKKLQINTNMTAKNKEIKRLQKTMKEAAKALDFEKAATLRDLILDLEKKEKR.

The Helicase ATP-binding domain maps to 28–185; the sequence is NNFKQGLKEQ…NKLIELKYQR (158 aa). Residue 41 to 48 participates in ATP binding; it reads GATGTGKT. The short motif at 94-117 is the Beta-hairpin element; sequence YYDYYQPEAYVASSDTYIEKDSKI. In terms of domain architecture, Helicase C-terminal spans 432–594; it reads QMDDLYFEIK…VTPTALNKTI (163 aa). A UVR domain is found at 629-664; sequence NKEIKRLQKTMKEAAKALDFEKAATLRDLILDLEKK.

This sequence belongs to the UvrB family. As to quaternary structure, forms a heterotetramer with UvrA during the search for lesions. Interacts with UvrC in an incision complex.

Its subcellular location is the cytoplasm. Its function is as follows. The UvrABC repair system catalyzes the recognition and processing of DNA lesions. A damage recognition complex composed of 2 UvrA and 2 UvrB subunits scans DNA for abnormalities. Upon binding of the UvrA(2)B(2) complex to a putative damaged site, the DNA wraps around one UvrB monomer. DNA wrap is dependent on ATP binding by UvrB and probably causes local melting of the DNA helix, facilitating insertion of UvrB beta-hairpin between the DNA strands. Then UvrB probes one DNA strand for the presence of a lesion. If a lesion is found the UvrA subunits dissociate and the UvrB-DNA preincision complex is formed. This complex is subsequently bound by UvrC and the second UvrB is released. If no lesion is found, the DNA wraps around the other UvrB subunit that will check the other stand for damage. This is UvrABC system protein B from Aster yellows witches'-broom phytoplasma (strain AYWB).